The sequence spans 86 residues: Small ribosomal subunit protein bS20 (86 aa).

Residues 1–22 (MANIKSAKKRAVQSEKRRKHNA) show a composition bias toward basic residues. The disordered stretch occupies residues 1–28 (MANIKSAKKRAVQSEKRRKHNASGRSMM).

This sequence belongs to the bacterial ribosomal protein bS20 family.

Binds directly to 16S ribosomal RNA. The chain is Small ribosomal subunit protein bS20 from Serratia proteamaculans (strain 568).